Consider the following 372-residue polypeptide: NAD(P)H-quinone oxidoreductase subunit 1 (372 aa).

Helical transmembrane passes span 31–51, 65–85, 97–117, 128–148, 176–196, 254–276, 304–324, and 347–367; these read PLPM…VVWL, PEFI…KLVL, LLFT…YLIL, VGLG…GLLM, LALS…VDIV, FALF…AVLY, LIFA…LIFL, and FLLP…LAFP.

Belongs to the complex I subunit 1 family. In terms of assembly, NDH-1 is composed of at least 11 different subunits.

It localises to the cellular thylakoid membrane. It carries out the reaction a plastoquinone + NADH + (n+1) H(+)(in) = a plastoquinol + NAD(+) + n H(+)(out). The catalysed reaction is a plastoquinone + NADPH + (n+1) H(+)(in) = a plastoquinol + NADP(+) + n H(+)(out). In terms of biological role, NDH-1 shuttles electrons from an unknown electron donor, via FMN and iron-sulfur (Fe-S) centers, to quinones in the respiratory and/or the photosynthetic chain. The immediate electron acceptor for the enzyme in this species is believed to be plastoquinone. Couples the redox reaction to proton translocation, and thus conserves the redox energy in a proton gradient. The polypeptide is NAD(P)H-quinone oxidoreductase subunit 1 (Leptolyngbya boryana (Plectonema boryanum)).